The following is a 517-amino-acid chain: Superoxide-generating NADPH oxidase heavy chain subunit A (517 aa).

At 1 to 19 (MRLPTKEEIQRYWVNEGNK) the chain is on the cytoplasmic side. The helical transmembrane segment at 20–40 (LILVILYTLGNIAAFVYTFVH) threads the bilayer. Residues 41–62 (YYNSPAFEVVGYGVCFARGCAQ) lie on the Extracellular side of the membrane. The 144-residue stretch at 58–201 (RGCAQLLKLN…LFVVFFGLLV (144 aa)) folds into the Ferric oxidoreductase domain. A helical membrane pass occupies residues 63–83 (LLKLNCALILVPVLRNLLSFL). Over 84 to 97 (RGTFLNNYVPFDKN) the chain is Cytoplasmic. A helical transmembrane segment spans residues 98-118 (IVFHKLIAWVICFATFGHVMA). Heme is bound by residues H101 and H115. At 119-149 (HFNNFRLYQDITPQEYKRILGIDYPNLTPIK) the chain is on the extracellular side. Residues 150-170 (YAFATLAGWTGHVVCIVMVLM) traverse the membrane as a helical segment. Topologically, residues 171–184 (YTSAVESIRRPMFE) are cytoplasmic. A helical transmembrane segment spans residues 185–205 (GFWYTHHLFVVFFGLLVVHGL). The heme site is built by H190 and H203. Position 206 (H206) is a topological domain, extracellular. Residues 207–227 (SILEPTSFWKWVIGPCALYIV) traverse the membrane as a helical segment. At 228–517 (ERLIRLLRSK…CRFHYNKENF (290 aa)) the chain is on the cytoplasmic side. The FAD-binding FR-type domain occupies 229–349 (RLIRLLRSKK…DGPFGAASEE (121 aa)). FAD is bound at residue 283 to 289 (HPFTITS).

As to quaternary structure, composed of a heavy chain and a light chain. It depends on FAD as a cofactor.

The protein resides in the membrane. In terms of biological role, critical component of the membrane-bound oxidase that generates superoxide. It is the terminal component of a respiratory chain that transfers single electrons from cytoplasmic NADPH across the plasma membrane to molecular oxygen on the exterior. The chain is Superoxide-generating NADPH oxidase heavy chain subunit A (noxA) from Dictyostelium discoideum (Social amoeba).